Here is a 238-residue protein sequence, read N- to C-terminus: Ribonuclease PH (238 aa).

Phosphate-binding positions include arginine 86 and 124 to 126 (GTR).

This sequence belongs to the RNase PH family. Homohexameric ring arranged as a trimer of dimers.

The enzyme catalyses tRNA(n+1) + phosphate = tRNA(n) + a ribonucleoside 5'-diphosphate. In terms of biological role, phosphorolytic 3'-5' exoribonuclease that plays an important role in tRNA 3'-end maturation. Removes nucleotide residues following the 3'-CCA terminus of tRNAs; can also add nucleotides to the ends of RNA molecules by using nucleoside diphosphates as substrates, but this may not be physiologically important. Probably plays a role in initiation of 16S rRNA degradation (leading to ribosome degradation) during starvation. The protein is Ribonuclease PH of Citrobacter koseri (strain ATCC BAA-895 / CDC 4225-83 / SGSC4696).